Consider the following 953-residue polypeptide: Isoleucine--tRNA ligase (953 aa).

A 'HIGH' region motif is present at residues 57–67 (PYANGDIHIGH). Glutamate 582 contacts L-isoleucyl-5'-AMP. The 'KMSKS' region motif lies at 623-627 (KMSKS). Lysine 626 provides a ligand contact to ATP. Cysteine 916, cysteine 919, cysteine 936, and cysteine 939 together coordinate Zn(2+).

The protein belongs to the class-I aminoacyl-tRNA synthetase family. IleS type 1 subfamily. In terms of assembly, monomer. It depends on Zn(2+) as a cofactor.

It is found in the cytoplasm. It carries out the reaction tRNA(Ile) + L-isoleucine + ATP = L-isoleucyl-tRNA(Ile) + AMP + diphosphate. Functionally, catalyzes the attachment of isoleucine to tRNA(Ile). As IleRS can inadvertently accommodate and process structurally similar amino acids such as valine, to avoid such errors it has two additional distinct tRNA(Ile)-dependent editing activities. One activity is designated as 'pretransfer' editing and involves the hydrolysis of activated Val-AMP. The other activity is designated 'posttransfer' editing and involves deacylation of mischarged Val-tRNA(Ile). The polypeptide is Isoleucine--tRNA ligase (Bordetella bronchiseptica (strain ATCC BAA-588 / NCTC 13252 / RB50) (Alcaligenes bronchisepticus)).